A 655-amino-acid chain; its full sequence is MPLKWKTSSPAIWKFPVPVLKTSRSTPLSPAYISLVEEEDQHMKLSLGGSEMGLSSHLQSSKAGPTRIFTSNTHSSVVLQGFDQLRLEGLLCDVTLMPGDTDDAFPVHRVMMASASDYFKAMFTGGMKEQDLMCIKLHGVSKVGLRKIIDFIYTAKLSLNMDNLQDTLEAASFLQILPVLDFCKVFLISGVTLDNCVEVGRIANTYNLTEVDKYVNSFVLKNFPALLSTGEFLKLPFERLAFVLSSNSLKHCTELELFKATCRWLRLEEPRMDFAAKLMKNIRFPLMTPQELINYVQTVDFMRTDNTCVNLLLEASNYQMMPYMQPVMQSDRTAIRSDTTHLVTLGGVLRQQLVVSKELRMYDEKAHEWKSLAPMDAPRYQHGIAVIGNFLYVVGGQSNYDTKGKTAVDTVFRFDPRYNKWMQVASLNEKRTFFHLSALKGYLYAVGGRNAAGELPTVECYNPRTNEWTYVAKMSEPHYGHAGTVYGGVMYISGGITHDTFQKELMCFDPDTDKWIQKAPMTTVRGLHCMCTVGERLYVIGGNHFRGTSDYDDVLSCEYYSPILDQWTPIAAMLRGQSDVGVAVFENKIYVVGGYSWNNRCMVEIVQKYDPDKDEWHKVFDLPESLGGIRACTLTVFPPEETTPSPSRESPLSAP.

In terms of domain architecture, BTB spans 92–161; it reads CDVTLMPGDT…IYTAKLSLNM (70 aa). One can recognise a BACK domain in the interval 196–297; sequence CVEVGRIANT…TPQELINYVQ (102 aa). 6 Kelch repeats span residues 341 to 389, 390 to 441, 442 to 488, 490 to 535, 537 to 587, and 588 to 636; these read HLVT…VIGN, FLYV…ALKG, YLYA…VYGG, MYIS…TVGE, LYVI…VFEN, and KIYV…TLTV.

Component of the BCR(KLHL9-KLHL13) E3 ubiquitin ligase complex, at least composed of CUL3, KLHL9, KLHL13 and RBX1. Interacts with AURKB.

The protein operates within protein modification; protein ubiquitination. Its function is as follows. Substrate-specific adapter of a BCR (BTB-CUL3-RBX1) E3 ubiquitin-protein ligase complex required for mitotic progression and cytokinesis. The BCR(KLHL9-KLHL13) E3 ubiquitin ligase complex mediates the ubiquitination of AURKB and controls the dynamic behavior of AURKB on mitotic chromosomes and thereby coordinates faithful mitotic progression and completion of cytokinesis. This is Kelch-like protein 13 (KLHL13) from Homo sapiens (Human).